Reading from the N-terminus, the 629-residue chain is Filament-like plant protein 2 (629 aa).

2 coiled-coil regions span residues 34–61 (WEKA…LEDR) and 102–171 (NTGL…LEAE). Residues 186 to 205 (SSNQSVDSHSDGGRERVEGS) form a disordered region. Over residues 193-203 (SHSDGGRERVE) the composition is skewed to basic and acidic residues. Positions 270–493 (ELSLMEKLEK…IEEKTMIKRE (224 aa)) form a coiled coil.

It belongs to the FPP family. As to quaternary structure, interacts with WPP/MAF proteins. Binds to COG2; this interaction promotes the association between cortical microtubules and EXO70A1. As to expression, accumulates in preferentially xylem cells.

The protein resides in the vesicle. Functionally, ensures, when in complex with FPP3/VETH1 and COG2, the correct secondary cell wall (SCW) deposition pattern by recruiting exocyst components to cortical microtubules in xylem cells during secondary cell wall deposition by recruiting EXO70A1. In Arabidopsis thaliana (Mouse-ear cress), this protein is Filament-like plant protein 2.